The following is a 493-amino-acid chain: Protein nucleotidyltransferase YdiU (493 aa).

ATP-binding residues include G81, G83, R84, K103, D115, G116, R166, and R173. D244 (proton acceptor) is an active-site residue. 2 residues coordinate Mg(2+): N245 and D254. D254 is an ATP binding site.

The protein belongs to the SELO family. Mg(2+) is required as a cofactor. Requires Mn(2+) as cofactor.

It catalyses the reaction L-seryl-[protein] + ATP = 3-O-(5'-adenylyl)-L-seryl-[protein] + diphosphate. The enzyme catalyses L-threonyl-[protein] + ATP = 3-O-(5'-adenylyl)-L-threonyl-[protein] + diphosphate. It carries out the reaction L-tyrosyl-[protein] + ATP = O-(5'-adenylyl)-L-tyrosyl-[protein] + diphosphate. The catalysed reaction is L-histidyl-[protein] + UTP = N(tele)-(5'-uridylyl)-L-histidyl-[protein] + diphosphate. It catalyses the reaction L-seryl-[protein] + UTP = O-(5'-uridylyl)-L-seryl-[protein] + diphosphate. The enzyme catalyses L-tyrosyl-[protein] + UTP = O-(5'-uridylyl)-L-tyrosyl-[protein] + diphosphate. Nucleotidyltransferase involved in the post-translational modification of proteins. It can catalyze the addition of adenosine monophosphate (AMP) or uridine monophosphate (UMP) to a protein, resulting in modifications known as AMPylation and UMPylation. The protein is Protein nucleotidyltransferase YdiU of Shewanella frigidimarina (strain NCIMB 400).